The sequence spans 602 residues: Peptide-N(4)-(N-acetyl-beta-glucosaminyl)asparagine amidase (602 aa).

One can recognise a Thioredoxin domain in the interval 2–130 (PVREVSRLPE…EKKFLERFVG (129 aa)). Cysteine 189, cysteine 192, cysteine 222, and cysteine 225 together coordinate Zn(2+). The active-site Nucleophile is the cysteine 248. Active-site residues include histidine 275 and aspartate 292. A PAW domain is found at 400–602 (DMGGRTTGSK…ESMVVRVYMK (203 aa)).

The protein belongs to the transglutaminase-like superfamily. PNGase family. The cofactor is Zn(2+).

Its subcellular location is the cytoplasm. It localises to the endoplasmic reticulum. It carries out the reaction Hydrolysis of an N(4)-(acetyl-beta-D-glucosaminyl)asparagine residue in which the glucosamine residue may be further glycosylated, to yield a (substituted) N-acetyl-beta-D-glucosaminylamine and a peptide containing an aspartate residue.. In terms of biological role, specifically deglycosylates the denatured form of N-linked glycoproteins in the cytoplasm and assists their proteasome-mediated degradation. Cleaves the beta-aspartyl-glucosamine (GlcNAc) of the glycan and the amide side chain of Asn, converting Asn to Asp. Prefers proteins containing high-mannose over those bearing complex type oligosaccharides. Can recognize misfolded proteins in the endoplasmic reticulum that are exported to the cytosol to be destroyed and deglycosylate them, while it has no activity toward native proteins. Deglycosylation is a prerequisite for subsequent proteasome-mediated degradation of some, but not all, misfolded glycoproteins. Also displays oxidoreductase (thioredoxin) activity. The chain is Peptide-N(4)-(N-acetyl-beta-glucosaminyl)asparagine amidase (png-1) from Caenorhabditis briggsae.